The primary structure comprises 220 residues: Probable GTP-binding protein EngB (220 aa).

Positions 31 to 205 (AGVEIAFAGR…LGILNEWCHP (175 aa)) constitute an EngB-type G domain. GTP contacts are provided by residues 39–46 (GRSNAGKS), 66–70 (GRTQL), 84–87 (DLPG), 151–154 (TKAD), and 184–186 (FSS). The Mg(2+) site is built by Ser46 and Thr68.

It belongs to the TRAFAC class TrmE-Era-EngA-EngB-Septin-like GTPase superfamily. EngB GTPase family. The cofactor is Mg(2+).

Its function is as follows. Necessary for normal cell division and for the maintenance of normal septation. The protein is Probable GTP-binding protein EngB of Shewanella sediminis (strain HAW-EB3).